A 201-amino-acid polypeptide reads, in one-letter code: Recombination protein RecR (201 aa).

The C4-type zinc finger occupies 57-72 (CKSCRTFTEEDECAIC). Residues 81–176 (GQLCVVEMPA…KVTRIAHGIP (96 aa)) form the Toprim domain.

Belongs to the RecR family.

Its function is as follows. May play a role in DNA repair. It seems to be involved in an RecBC-independent recombinational process of DNA repair. It may act with RecF and RecO. The protein is Recombination protein RecR of Glaesserella parasuis serovar 5 (strain SH0165) (Haemophilus parasuis).